The sequence spans 614 residues: Dihydroxy-acid dehydratase (614 aa).

A Mg(2+)-binding site is contributed by aspartate 81. [2Fe-2S] cluster is bound at residue cysteine 122. Positions 123 and 124 each coordinate Mg(2+). N6-carboxylysine is present on lysine 124. Cysteine 193 contacts [2Fe-2S] cluster. Glutamate 489 lines the Mg(2+) pocket. Residue serine 515 is the Proton acceptor of the active site.

This sequence belongs to the IlvD/Edd family. As to quaternary structure, homodimer. [2Fe-2S] cluster is required as a cofactor. It depends on Mg(2+) as a cofactor.

The catalysed reaction is (2R)-2,3-dihydroxy-3-methylbutanoate = 3-methyl-2-oxobutanoate + H2O. The enzyme catalyses (2R,3R)-2,3-dihydroxy-3-methylpentanoate = (S)-3-methyl-2-oxopentanoate + H2O. Its pathway is amino-acid biosynthesis; L-isoleucine biosynthesis; L-isoleucine from 2-oxobutanoate: step 3/4. It participates in amino-acid biosynthesis; L-valine biosynthesis; L-valine from pyruvate: step 3/4. Functions in the biosynthesis of branched-chain amino acids. Catalyzes the dehydration of (2R,3R)-2,3-dihydroxy-3-methylpentanoate (2,3-dihydroxy-3-methylvalerate) into 2-oxo-3-methylpentanoate (2-oxo-3-methylvalerate) and of (2R)-2,3-dihydroxy-3-methylbutanoate (2,3-dihydroxyisovalerate) into 2-oxo-3-methylbutanoate (2-oxoisovalerate), the penultimate precursor to L-isoleucine and L-valine, respectively. The chain is Dihydroxy-acid dehydratase from Saccharophagus degradans (strain 2-40 / ATCC 43961 / DSM 17024).